The chain runs to 213 residues: Protein-L-isoaspartate O-methyltransferase (213 aa).

Serine 61 is an active-site residue.

This sequence belongs to the methyltransferase superfamily. L-isoaspartyl/D-aspartyl protein methyltransferase family.

It is found in the cytoplasm. It catalyses the reaction [protein]-L-isoaspartate + S-adenosyl-L-methionine = [protein]-L-isoaspartate alpha-methyl ester + S-adenosyl-L-homocysteine. Catalyzes the methyl esterification of L-isoaspartyl residues in peptides and proteins that result from spontaneous decomposition of normal L-aspartyl and L-asparaginyl residues. It plays a role in the repair and/or degradation of damaged proteins. In Maricaulis maris (strain MCS10) (Caulobacter maris), this protein is Protein-L-isoaspartate O-methyltransferase.